Consider the following 107-residue polypeptide: Nucleoid-associated protein R00231 (107 aa).

This sequence belongs to the YbaB/EbfC family. As to quaternary structure, homodimer.

It is found in the cytoplasm. It localises to the nucleoid. Binds to DNA and alters its conformation. May be involved in regulation of gene expression, nucleoid organization and DNA protection. This Rhizobium meliloti (strain 1021) (Ensifer meliloti) protein is Nucleoid-associated protein R00231.